Here is a 124-residue protein sequence, read N- to C-terminus: Large ribosomal subunit protein uL22 (124 aa).

This sequence belongs to the universal ribosomal protein uL22 family. Part of the 50S ribosomal subunit.

Functionally, this protein binds specifically to 23S rRNA; its binding is stimulated by other ribosomal proteins, e.g. L4, L17, and L20. It is important during the early stages of 50S assembly. It makes multiple contacts with different domains of the 23S rRNA in the assembled 50S subunit and ribosome. In terms of biological role, the globular domain of the protein is located near the polypeptide exit tunnel on the outside of the subunit, while an extended beta-hairpin is found that lines the wall of the exit tunnel in the center of the 70S ribosome. In Synechococcus sp. (strain JA-2-3B'a(2-13)) (Cyanobacteria bacterium Yellowstone B-Prime), this protein is Large ribosomal subunit protein uL22.